The chain runs to 198 residues: MHYPEPISKLIDSFMKLPGIGPKTAQRLAFHVLDMKEDDVVQFAKALVDVKRELTYCSVCGHITEEDPCYICNDKQRDRSVICVVEDDKDVIAMEKMREYKGLYHVLHGAISPMDGIGPEDINIPSLIERLKDEEVKELILAMNPNLEGESTAMYISRLVKPIGIKVTRLAQGLSVGGDLEYADEVTLSRAIEGRTEM.

A C4-type zinc finger spans residues 57–72 (CSVCGHITEEDPCYIC). The region spanning 80–175 (SVICVVEDDK…KVTRLAQGLS (96 aa)) is the Toprim domain.

Belongs to the RecR family.

May play a role in DNA repair. It seems to be involved in an RecBC-independent recombinational process of DNA repair. It may act with RecF and RecO. In Staphylococcus carnosus (strain TM300), this protein is Recombination protein RecR.